Consider the following 225-residue polypeptide: 7-cyano-7-deazaguanine synthase (225 aa).

10-20 (LSGGIDSATAA) is a binding site for ATP. Residues cysteine 191, cysteine 199, cysteine 202, and cysteine 205 each contribute to the Zn(2+) site.

It belongs to the QueC family. The cofactor is Zn(2+).

The enzyme catalyses 7-carboxy-7-deazaguanine + NH4(+) + ATP = 7-cyano-7-deazaguanine + ADP + phosphate + H2O + H(+). Its pathway is purine metabolism; 7-cyano-7-deazaguanine biosynthesis. Its function is as follows. Catalyzes the ATP-dependent conversion of 7-carboxy-7-deazaguanine (CDG) to 7-cyano-7-deazaguanine (preQ(0)). In Prochlorococcus marinus (strain NATL1A), this protein is 7-cyano-7-deazaguanine synthase.